Reading from the N-terminus, the 88-residue chain is Small ribosomal subunit protein bS20 (88 aa).

Disordered stretches follow at residues 1 to 22 and 69 to 88; these read MPNI…AQNA and KNAA…GLSA.

This sequence belongs to the bacterial ribosomal protein bS20 family.

Functionally, binds directly to 16S ribosomal RNA. This is Small ribosomal subunit protein bS20 from Shouchella clausii (strain KSM-K16) (Alkalihalobacillus clausii).